A 438-amino-acid polypeptide reads, in one-letter code: MNLKKTENALSLTLKNFIKSESFGGIFLFLNAVLAMVVANSFLKESYFALWHTPFGFQIGDFFIGFSLHNWIDDVLMALFFLMIGLEIKRELLFGELSSFKKASFPVIAALGGMIAPGLIYFFLNADTPSQHGFGIPMATDIAFALGVIMLLGKRVPTALKVFLITLAVADDLGAIIVIALFYTTNLKFAWLLGALGVVLLLALLNRLNMRSLVPYLLLGVLLWFCVHQSGIHATIAAVVLAFMIPVKIPKDSKNVELLELGKRYAETSSGALLTKEQQEILHSIEEKASALQSPLERLEHFLAPISGYFIMPLFAFANAGVSVDSSINLEVDKVLFGVILGLCLGKPLGIFLITFISEKLKITARPKGISWWHILGAGLLAGIGFTMSMFISNLAFTSEHKDAMEVAKIAILLGSLISGIIGALYLFALDKRAALKK.

Transmembrane regions (helical) follow at residues 23 to 43, 62 to 82, 104 to 124, 133 to 153, 162 to 182, 185 to 205, 221 to 241, 302 to 322, 337 to 357, 372 to 392, and 410 to 430; these read FGGI…NSFL, FFIG…LFFL, SFPV…YFFL, GFGI…MLLG, VFLI…IALF, TNLK…LALL, VLLW…AVVL, FLAP…NAGV, FGVI…ITFI, WWHI…SMFI, and IAIL…LFAL.

It belongs to the NhaA Na(+)/H(+) (TC 2.A.33) antiporter family.

The protein localises to the cell inner membrane. It catalyses the reaction Na(+)(in) + 2 H(+)(out) = Na(+)(out) + 2 H(+)(in). In terms of biological role, na(+)/H(+) antiporter that extrudes sodium in exchange for external protons. The sequence is that of Na(+)/H(+) antiporter NhaA from Helicobacter pylori (strain P12).